The following is a 359-amino-acid chain: Dual-specificity RNA methyltransferase RlmN (359 aa).

The Proton acceptor role is filled by Glu-98. The 226-residue stretch at 104–329 (EPKRGTLCIS…LEHGLTATIR (226 aa)) folds into the Radical SAM core domain. The cysteines at positions 111 and 340 are disulfide-linked. Residues Cys-118, Cys-122, and Cys-125 each contribute to the [4Fe-4S] cluster site. S-adenosyl-L-methionine is bound by residues 166–167 (GE), Ser-198, 220–222 (SLH), and Asn-297. Cys-340 (S-methylcysteine intermediate) is an active-site residue.

It belongs to the radical SAM superfamily. RlmN family. The cofactor is [4Fe-4S] cluster.

It localises to the cytoplasm. The catalysed reaction is adenosine(2503) in 23S rRNA + 2 reduced [2Fe-2S]-[ferredoxin] + 2 S-adenosyl-L-methionine = 2-methyladenosine(2503) in 23S rRNA + 5'-deoxyadenosine + L-methionine + 2 oxidized [2Fe-2S]-[ferredoxin] + S-adenosyl-L-homocysteine. The enzyme catalyses adenosine(37) in tRNA + 2 reduced [2Fe-2S]-[ferredoxin] + 2 S-adenosyl-L-methionine = 2-methyladenosine(37) in tRNA + 5'-deoxyadenosine + L-methionine + 2 oxidized [2Fe-2S]-[ferredoxin] + S-adenosyl-L-homocysteine. Specifically methylates position 2 of adenine 2503 in 23S rRNA and position 2 of adenine 37 in tRNAs. m2A2503 modification seems to play a crucial role in the proofreading step occurring at the peptidyl transferase center and thus would serve to optimize ribosomal fidelity. In Halorhodospira halophila (strain DSM 244 / SL1) (Ectothiorhodospira halophila (strain DSM 244 / SL1)), this protein is Dual-specificity RNA methyltransferase RlmN.